The primary structure comprises 529 residues: Peptide chain release factor 3 (529 aa).

The tr-type G domain maps to 11–280 (SKRRTFAIIS…SLIKWAPSPI (270 aa)). GTP is bound by residues 20 to 27 (SHPDAGKT), 88 to 92 (DTPGH), and 142 to 145 (NKLD).

This sequence belongs to the TRAFAC class translation factor GTPase superfamily. Classic translation factor GTPase family. PrfC subfamily.

It localises to the cytoplasm. Increases the formation of ribosomal termination complexes and stimulates activities of RF-1 and RF-2. It binds guanine nucleotides and has strong preference for UGA stop codons. It may interact directly with the ribosome. The stimulation of RF-1 and RF-2 is significantly reduced by GTP and GDP, but not by GMP. The polypeptide is Peptide chain release factor 3 (Buchnera aphidicola subsp. Schizaphis graminum (strain Sg)).